Reading from the N-terminus, the 174-residue chain is Methylamine utilization protein MauL (174 aa).

Its pathway is one-carbon metabolism; methylamine degradation. Probably involved in TTQ prosthetic group biosynthesis. This chain is Methylamine utilization protein MauL (mauL), found in Methylophilus methylotrophus (Bacterium W3A1).